A 416-amino-acid chain; its full sequence is 5-methylthioadenosine/S-adenosylhomocysteine deaminase 2 (416 aa).

Zn(2+) is bound by residues His58 and His60. Residues Glu86 and His178 each coordinate substrate. Residue His205 participates in Zn(2+) binding. Residues Glu208 and Asp293 each contribute to the substrate site. Asp293 serves as a coordination point for Zn(2+).

The protein belongs to the metallo-dependent hydrolases superfamily. MTA/SAH deaminase family. The cofactor is Zn(2+).

The enzyme catalyses S-adenosyl-L-homocysteine + H2O + H(+) = S-inosyl-L-homocysteine + NH4(+). The catalysed reaction is S-methyl-5'-thioadenosine + H2O + H(+) = S-methyl-5'-thioinosine + NH4(+). Its function is as follows. Catalyzes the deamination of 5-methylthioadenosine and S-adenosyl-L-homocysteine into 5-methylthioinosine and S-inosyl-L-homocysteine, respectively. Is also able to deaminate adenosine. This Archaeoglobus fulgidus (strain ATCC 49558 / DSM 4304 / JCM 9628 / NBRC 100126 / VC-16) protein is 5-methylthioadenosine/S-adenosylhomocysteine deaminase 2.